A 183-amino-acid polypeptide reads, in one-letter code: MHLLPEQATRHAVSIPELLVSRDERQARQHAWLTRHLTPLVSFTVVAPGPIKDSELTRRIFNHGVTALLAVAKKAGWSVREQAALASASGPEGFLAIEAPARDLKLATIELEHQHPLGRLWDIDVLTPEGDILSRRHFSLPARRCLLCEQSAAECARGKTHALSDLLIRMEALLHDADSSHIN.

It belongs to the CitX family.

It catalyses the reaction apo-[citrate lyase ACP] + 2'-(5''-triphospho-alpha-D-ribosyl)-3'-dephospho-CoA = holo-[citrate lyase ACP] + diphosphate. Transfers 2-(5''-triphosphoribosyl)-3'-dephosphocoenzyme-A on a serine residue to the apo-acyl carrier protein (gamma chain) of the citrate lyase to yield holo-acyl carrier protein. This is Apo-citrate lyase phosphoribosyl-dephospho-CoA transferase from Citrobacter koseri (strain ATCC BAA-895 / CDC 4225-83 / SGSC4696).